The following is a 109-amino-acid chain: UPF0060 membrane protein HEAR0108 (109 aa).

4 helical membrane passes run 7 to 27 (VALF…PYLW), 33 to 53 (SIWL…LLSL), 63 to 83 (AAYG…VDGI), and 87 to 107 (NWDV…MFAP).

Belongs to the UPF0060 family.

The protein resides in the cell inner membrane. This chain is UPF0060 membrane protein HEAR0108, found in Herminiimonas arsenicoxydans.